A 1065-amino-acid chain; its full sequence is Valine--tRNA ligase, mitochondrial (1065 aa).

The transit peptide at 1–15 directs the protein to the mitochondrion; sequence MPHLPLASFRPPLWG. The disordered stretch occupies residues 27–52; the sequence is ALCTQPEPHGSPVSRRNREAKQKRLR. Basic and acidic residues predominate over residues 42–52; it reads RNREAKQKRLR. Residues 146–156 carry the 'HIGH' region motif; it reads PNVTGSLHIGH. The 'KMSKS' region motif lies at 659–663; the sequence is KMSKS. Lys662 contributes to the ATP binding site.

Belongs to the class-I aminoacyl-tRNA synthetase family.

The protein resides in the mitochondrion. It catalyses the reaction tRNA(Val) + L-valine + ATP = L-valyl-tRNA(Val) + AMP + diphosphate. Its function is as follows. Catalyzes the attachment of valine to tRNA(Val) in a two-step reaction: valine is first activated by ATP to form Val-AMP and then transferred to the acceptor end of tRNA(Val). The protein is Valine--tRNA ligase, mitochondrial (Vars2) of Rattus norvegicus (Rat).